Here is a 124-residue protein sequence, read N- to C-terminus: Large ribosomal subunit protein bL12 (124 aa).

The protein belongs to the bacterial ribosomal protein bL12 family. As to quaternary structure, homodimer. Part of the ribosomal stalk of the 50S ribosomal subunit. Forms a multimeric L10(L12)X complex, where L10 forms an elongated spine to which 2 to 4 L12 dimers bind in a sequential fashion. Binds GTP-bound translation factors.

Functionally, forms part of the ribosomal stalk which helps the ribosome interact with GTP-bound translation factors. Is thus essential for accurate translation. The sequence is that of Large ribosomal subunit protein bL12 from Liberibacter africanus subsp. capensis.